Consider the following 217-residue polypeptide: Peptide methionine sulfoxide reductase MsrA 1 (217 aa).

Cys-57 is a catalytic residue.

The protein belongs to the MsrA Met sulfoxide reductase family.

The catalysed reaction is L-methionyl-[protein] + [thioredoxin]-disulfide + H2O = L-methionyl-(S)-S-oxide-[protein] + [thioredoxin]-dithiol. It catalyses the reaction [thioredoxin]-disulfide + L-methionine + H2O = L-methionine (S)-S-oxide + [thioredoxin]-dithiol. Has an important function as a repair enzyme for proteins that have been inactivated by oxidation. Catalyzes the reversible oxidation-reduction of methionine sulfoxide in proteins to methionine. In Rhizobium meliloti (strain 1021) (Ensifer meliloti), this protein is Peptide methionine sulfoxide reductase MsrA 1 (msrA1).